The sequence spans 260 residues: Transcription factor MYB4 (260 aa).

2 consecutive HTH myb-type domains span residues 12–64 (AVEV…LNYL) and 65–119 (RPGI…SKRS). 2 DNA-binding regions (H-T-H motif) span residues 40 to 64 (WRMLPAKAGLKRCGKSCRLRWLNYL) and 92 to 115 (WSIIAGRIPGRTDNEIKNHWNTHL).

It is found in the nucleus. Functionally, transcription activator involved in the spatiotemporal regulation of flavonoid biosynthesis specifically in the corms of Montbretia. Activates the promoters of enzymes involved in the biosynthesis of the flavonol myricetin and the flavonol-glycoside montbretin A (MbA). MbA is a potent inhibitor of human pancreatic alpha-amylase and is being developed as drug candidate to treat type-2 diabetes. The polypeptide is Transcription factor MYB4 (Crocosmia x crocosmiiflora (Montbretia)).